Here is a 137-residue protein sequence, read N- to C-terminus: Glutamate mutase sigma subunit (137 aa).

The B12-binding domain maps to 3–137 (KKTIVLGVIG…ADMKEVLGVE (135 aa)). Adenosylcob(III)alamin is bound by residues 13–17 (SDCHA), histidine 16, 61–63 (SSL), and 93–97 (NIVVG).

Belongs to the methylaspartate mutase GlmS subunit family. Heterotetramer composed of 2 epsilon subunits (GlmE) and 2 sigma subunits (GlmS). GlmE exists as a homodimer and GlmS as a monomer. It depends on adenosylcob(III)alamin as a cofactor.

It catalyses the reaction (2S,3S)-3-methyl-L-aspartate = L-glutamate. It participates in amino-acid degradation; L-glutamate degradation via mesaconate pathway; acetate and pyruvate from L-glutamate: step 1/4. Its function is as follows. Catalyzes the carbon skeleton rearrangement of L-glutamate to L-threo-3-methylaspartate ((2S,3S)-3-methylaspartate). The protein is Glutamate mutase sigma subunit of Clostridium tetanomorphum.